Reading from the N-terminus, the 1047-residue chain is Protein masquerade (1047 aa).

A signal peptide spans 1-30 (MPRHSSTMSRLVLPLIFSILLVSKPSPSQA). The interval 54-87 (KDCPGVCVHTLATLICYEVLDDVACPSPSMKCCI) is CLIP 1. 3 disulfide bridges follow: Cys56-Cys85, Cys60-Cys78, and Cys69-Cys86. Asn95 carries N-linked (GlcNAc...) asparagine glycosylation. 2 stretches are compositionally biased toward low complexity: residues 98–139 (AVRA…STTP) and 148–175 (KRPATSSTTKATVATTKKPSTTKKVATA). A disordered region spans residues 98–189 (AVRATTTPKT…KEEATKADDA (92 aa)). Over residues 176-189 (KPKDKEEATKADDA) the composition is skewed to basic and acidic residues. Residues 192 to 224 (DCTGVCVADRIAEYCEAYLTSDGLCKEGTKCCV) are CLIP 2. Intrachain disulfides connect Cys193–Cys222, Cys197–Cys216, and Cys206–Cys223. Asn251 is a glycosylation site (N-linked (GlcNAc...) asparagine). Residues 252-335 (QTLSEKSAPA…PLSNKLKSGQ (84 aa)) form a disordered region. Over residues 263–280 (SSSTSTTSTTTTTSTTTT) the composition is skewed to low complexity. The N-linked (GlcNAc...) asparagine glycan is linked to Asn287. Acidic residues predominate over residues 307–325 (AAEEEEEQETEEDGEEEEP). The CLIP 3 stretch occupies residues 343 to 374 (ECEGECMNGIFAIFCDDIDSDAFCPGEESCCV). 3 cysteine pairs are disulfide-bonded: Cys344–Cys372, Cys348–Cys366, and Cys357–Cys373. The disordered stretch occupies residues 376–428 (GGASEATPSSKAPPTKPAIKHAPKPAAKPARPASPPPAPPSSTSGGGGGGDFL). Positions 457–492 (RCPGFCLLNIMAAFCERPSVLVSTPTTCAKGSVCCD) are CLIP 4. 3 disulfide bridges follow: Cys458/Cys490, Cys462/Cys484, and Cys471/Cys491. The tract at residues 498–527 (APKPKLPPPTPSPTASPTAPPYVLPNTPSP) is disordered. The segment covering 501-527 (PKLPPPTPSPTASPTAPPYVLPNTPSP) has biased composition (pro residues). The CLIP 5 stretch occupies residues 532–567 (ECPGSCIVSLLSFTCFKNAEMTDLFRCKRSGQICCA). Cystine bridges form between Cys533-Cys565, Cys537-Cys558, and Cys546-Cys566. Asn582 carries an N-linked (GlcNAc...) asparagine glycan. Residues 583–673 (DTAYYPAPPP…TTTTTTTTPR (91 aa)) are disordered. 3 stretches are compositionally biased toward pro residues: residues 588–606 (PAPPPPPIGPPQAYPPQTP), 613–638 (NPPPQGPPPQMAPHHPNPYQPPPPAP), and 650–661 (GLPPQPQPPMTT). The span at 662 to 672 (PPTTTTTTTTP) shows a compositional bias: low complexity. Disulfide bonds link Cys682/Cys916, Cys829/Cys845, Cys930/Cys1001, Cys961/Cys981, and Cys991/Cys1019. N-linked (GlcNAc...) asparagine glycosylation is found at Asn726 and Asn794. A peptidase S1 region spans residues 803 to 1043 (VVGGEDGENG…FIGWINQIIS (241 aa)).

It belongs to the peptidase S1 family. CLIP subfamily. Proteolytically cleaved and thereafter secreted.

Its subcellular location is the secreted. The protein localises to the cell projection. It localises to the axon. In terms of biological role, in embryogenesis, has a role in somatic muscle attachment and in the development of axonal pathways probably by stabilizing cell-matrix adhesion and/or by acting as a competitive antagonist of serine proteases. The sequence is that of Protein masquerade from Drosophila melanogaster (Fruit fly).